We begin with the raw amino-acid sequence, 535 residues long: Dual specificity mitogen-activated protein kinase kinase 7 (535 aa).

Ala-2 carries the post-translational modification N-acetylalanine. Residues 2-30 adopt a coiled-coil conformation; that stretch reads AASSLEQKLSRLEAKLKQENREARRRIDL. Residues 37–73 are d domain; that stretch reads QRPRPIIVITLSPAPAPSQRAALQLPLANDGGSRSPS. The interval 63-93 is disordered; that stretch reads LANDGGSRSPSSESSPQHPTPPTRPRHMLGL. Positions 69–79 are enriched in low complexity; sequence SRSPSSESSPQ. The region spanning 136–396 is the Protein kinase domain; that stretch reads LENLGEMGSG…YNKLLEHSFI (261 aa). ATP is bound by residues 142–150 and Lys-165; that span reads MGSGTCGQV. The active-site Proton acceptor is the Asp-259. Ser-287 bears the Phosphoserine; by MAP3K mark. Thr-291 is modified (phosphothreonine; by MAP3K). Residues 393-416 form a DVD domain region; it reads HSFIKHYEILEVDVASWFKDVMAK. Residue Ser-427 is modified to Phosphoserine.

The protein belongs to the protein kinase superfamily. STE Ser/Thr protein kinase family. MAP kinase kinase subfamily. As to quaternary structure, interacts with RASSF7, the interaction promotes phosphorylation. Interacts with VRK2. Interacts (via its D domain) with its substrates MAPK8/JNK1, MAPK9/JNK2 and MAPK10/JNK3. Interacts (via its DVD domain) with MAP3Ks activators like MAP3K5/ASK1 and MAP3K1/MEKK1. Interacts with SH3RF1, MAPK8IP1/JIP1, MAPK8IP2/JIP2 and MAPK8IP3/JIP3 scaffold proteins. Found in a complex with SH3RF1, RAC1, MAP3K11/MLK3, MAPK8IP1/JIP1 and MAPK8/JNK1. Found in a complex with SH3RF1, RAC2, MAP3K7/TAK1, MAPK8IP1/JIP1, MAPK8/JNK1 and MAPK9/JNK2. Requires Mg(2+) as cofactor. Post-translationally, activated by phosphorylation on Ser-287 and Thr-291 by MAP kinase kinase kinases (MAP3Ks). Expressed at high levels in brain, lung, liver, skeletal muscle, kidney, and testis and at lower levels in the heart and spleen.

Its subcellular location is the nucleus. It is found in the cytoplasm. It catalyses the reaction L-seryl-[protein] + ATP = O-phospho-L-seryl-[protein] + ADP + H(+). It carries out the reaction L-threonyl-[protein] + ATP = O-phospho-L-threonyl-[protein] + ADP + H(+). The catalysed reaction is L-tyrosyl-[protein] + ATP = O-phospho-L-tyrosyl-[protein] + ADP + H(+). With respect to regulation, activated by phosphorylation by specific MAP kinase kinase kinases such as MAP3K1/MEKK1, MAP3K3/MEKK3, MAP3K11/MLK3 and MAP3K12/DLK. Isoforms 3 and 4 have lower basal activity but a higher level of inducible activation, than isoforms 2, 6, 7 and 8. In terms of biological role, dual specificity protein kinase which acts as an essential component of the MAP kinase signal transduction pathway. Essential component of the stress-activated protein kinase/c-Jun N-terminal kinase (SAP/JNK) signaling pathway. With MAP2K4/MKK4, is the one of the only known kinase to directly activate the stress-activated protein kinase/c-Jun N-terminal kinases MAPK8/JNK1, MAPK9/JNK2 and MAPK10/JNK3. MAP2K4/MKK4 and MAP2K7/MKK7 both activate the JNKs by phosphorylation, but they differ in their preference for the phosphorylation site in the Thr-Pro-Tyr motif. MAP2K4/MKK4 shows preference for phosphorylation of the Tyr residue and MAP2K7/MKK7 for the Thr residue. The monophosphorylation of JNKs on the Thr residue is sufficient to increase JNK activity indicating that MAP2K7/MKK7 is important to trigger JNK activity, while the additional phosphorylation of the Tyr residue by MAP2K4/MKK4 ensures optimal JNK activation. Has a specific role in JNK signal transduction pathway activated by pro-inflammatory cytokines. The MKK/JNK signaling pathway is also involved in mitochondrial death signaling pathway, including the release cytochrome c, leading to apoptosis. Part of a non-canonical MAPK signaling pathway, composed of the upstream MAP3K12 kinase and downstream MAP kinases MAPK1/ERK2 and MAPK3/ERK1, that enhances the AP-1-mediated transcription of APP in response to APOE. This chain is Dual specificity mitogen-activated protein kinase kinase 7, found in Mus musculus (Mouse).